An 89-amino-acid polypeptide reads, in one-letter code: Small ribosomal subunit protein bS16 (89 aa).

This sequence belongs to the bacterial ribosomal protein bS16 family.

The sequence is that of Small ribosomal subunit protein bS16 from Desulforamulus reducens (strain ATCC BAA-1160 / DSM 100696 / MI-1) (Desulfotomaculum reducens).